The sequence spans 769 residues: 4-hydroxybenzoyl-CoA reductase subunit alpha (769 aa).

Mo-molybdopterin cytosine dinucleotide-binding positions include Gln214, 244–245 (GF), 522–526 (SSRVT), 650–655 (VGKALN), and 722–725 (KEAS).

It belongs to the xanthine dehydrogenase family. In terms of assembly, heterohexamer of two alpha, two beta and two gamma subunits. Requires Mo-molybdopterin cytosine dinucleotide as cofactor. In terms of processing, the N-terminus is blocked.

The catalysed reaction is oxidized 2[4Fe-4S]-[ferredoxin] + benzoyl-CoA + H2O = 4-hydroxybenzoyl-CoA + reduced 2[4Fe-4S]-[ferredoxin] + 2 H(+). With respect to regulation, inactivated by low concentrations of cyanide in vitro. Functionally, component of a complex that catalyzes the reductive dehydroxylation of 4-hydroxybenzoyl-CoA to benzoyl-CoA. Reaction is not reversible. Is a key enzyme in the anaerobic degradation of phenolic compounds. The polypeptide is 4-hydroxybenzoyl-CoA reductase subunit alpha (hcrA) (Thauera aromatica).